Here is a 957-residue protein sequence, read N- to C-terminus: Calsyntenin-3 (957 aa).

Positions 1 to 19 (MTPLLFPLLLASLLPSSSC) are cleaved as a signal peptide. The Extracellular portion of the chain corresponds to 20 to 848 (NKANKHKPWI…SHRNSMVPSA (829 aa)). Cadherin domains are found at residues 29 to 145 (IEAE…APVF) and 146 to 246 (VERL…KPSW). N-linked (GlcNAc...) asparagine glycosylation is found at Asn-299, Asn-347, and Asn-508. Residues 849–869 (ATLIIVVCVGFLVLMVVLGLV) traverse the membrane as a helical segment. Topologically, residues 870-957 (RIHSLHRRVS…RIIETPPHRY (88 aa)) are cytoplasmic. A disordered region spans residues 919–957 (CVAGAAGGQQDDEDSSDSEAADSPSSDERRIIETPPHRY). The segment covering 928-938 (QDDEDSSDSEA) has biased composition (acidic residues). Positions 944–957 (SDERRIIETPPHRY) are enriched in basic and acidic residues.

Belongs to the calsyntenin family. As to quaternary structure, interacts (via cadherin domains) with both alpha and beta isoforms of neurexins (NRXN1, NRXN2 and NRXN3). Directly interacts with APBA2. Forms a tripartite complex with APBA2 and APP. Interacts with low affinity with KLC1. Interacts with SLC23A2/SVCT2. Post-translationally, proteolytically processed under normal cellular conditions. A primary zeta-cleavage generates a large extracellular (soluble) N-terminal domain (sAlc) and a short C-terminal transmembrane fragment (CTF1). A secondary cleavage catalyzed by gamma-secretase within the transmembrane domain releases the beta-Alc-beta chain in the extracellular milieu and produces an intracellular fragment (AlcICD). This processing is strongly suppressed in the tripartite complex formed with APBA2 and APP, which seems to prevent the association with gamma-secretase.

Its subcellular location is the postsynaptic cell membrane. It is found in the endoplasmic reticulum membrane. The protein resides in the golgi apparatus membrane. It localises to the cell projection. The protein localises to the dendrite. Postsynaptic adhesion molecule that binds to presynaptic neurexins to mediate both excitatory and inhibitory synapse formation. Promotes synapse development by acting as a cell adhesion molecule at the postsynaptic membrane, which associates with both neurexin-alpha and neurexin-beta proteins at the presynaptic membrane. Regulates the balance between excitatory and inhibitory synapses by inhibiting formation of excitatory parallel-fiber synapses and promoting formation of inhibitory synapses in the same neuron. May also be involved in ascorbate (vitamin C) uptake via its interaction with SLC23A2/SVCT2. Complex formation with APBA2 and APP, stabilizes APP metabolism and enhances APBA2-mediated suppression of beta-APP40 secretion, due to the retardation of intracellular APP maturation. This chain is Calsyntenin-3 (CLSTN3), found in Bos taurus (Bovine).